The chain runs to 1097 residues: Putative regulator of nonsense transcripts 1 (1097 aa).

The segment covering 42 to 53 (SQTQTQGHTQSQ) has biased composition (low complexity). A disordered region spans residues 42-67 (SQTQTQGHTQSQLDNQLNGPDDGLHN). In terms of domain architecture, Upf1 CH-rich spans 96–254 (TKDLPVHACR…NKLEELWKDN (159 aa)). Zn(2+) contacts are provided by Cys-104, Cys-108, Cys-119, Ser-122, Cys-127, His-137, His-141, Cys-147, Cys-165, Cys-168, Cys-191, and Cys-195. A C3H region spans residues 104 to 137 (CRSYCGIHDPACVVYCNTSKKWFCNGRGNTSGSH). The CC/SHH/C stretch occupies residues 119 to 147 (CNTSKKWFCNGRGNTSGSHIVNHLVRAKC). The tract at residues 165–195 (CYNCGCRNVFLLGFIPAKADSVVVLLCRQPC) is C4. Residues Gln-457, 474 to 481 (GPPGTGKT), Tyr-683, and Glu-813 each bind ATP. Residues 977–998 (QGQTNGPAAGRGAMKGKSGRGG) form a disordered region.

It belongs to the DNA2/NAM7 helicase family.

Its subcellular location is the cytoplasm. The protein localises to the P-body. The catalysed reaction is ATP + H2O = ADP + phosphate + H(+). Functionally, RNA-dependent helicase required for nonsense-mediated decay (NMD) of aberrant mRNAs containing premature stop codons and modulates the expression level of normal mRNAs. The formation of an rent1-rent2-rent3 surveillance complex is believed to activate NMD. This chain is Putative regulator of nonsense transcripts 1 (rent1), found in Takifugu rubripes (Japanese pufferfish).